An 884-amino-acid polypeptide reads, in one-letter code: Translation initiation factor IF-2 (884 aa).

The disordered stretch occupies residues 93–288 (VNTPEAEQAK…KGKRKPSTLQ (196 aa)). Over residues 99–209 (EQAKAEEQAQ…KMAAENEGKW (111 aa)) the composition is skewed to basic and acidic residues. Positions 216–229 (QTESADYHVTTSQH) are enriched in polar residues. The span at 231-246 (RAAEDENDAKVEGDRR) shows a compositional bias: basic and acidic residues. The span at 247–261 (SRTRGGKATKQKKGN) shows a compositional bias: basic residues. Basic and acidic residues predominate over residues 262-275 (KLSESKADREEARA). Residues 383–552 (HRAPVVTIMG…LLQAEVLELK (170 aa)) enclose the tr-type G domain. Positions 392–399 (GHVDHGKT) are G1. 392–399 (GHVDHGKT) is a GTP binding site. The tract at residues 417 to 421 (GITQH) is G2. The interval 438–441 (DTPG) is G3. GTP-binding positions include 438–442 (DTPGH) and 492–495 (NKID). The tract at residues 492 to 495 (NKID) is G4. The segment at 528 to 530 (SAK) is G5.

The protein belongs to the TRAFAC class translation factor GTPase superfamily. Classic translation factor GTPase family. IF-2 subfamily.

The protein resides in the cytoplasm. Its function is as follows. One of the essential components for the initiation of protein synthesis. Protects formylmethionyl-tRNA from spontaneous hydrolysis and promotes its binding to the 30S ribosomal subunits. Also involved in the hydrolysis of GTP during the formation of the 70S ribosomal complex. The protein is Translation initiation factor IF-2 of Yersinia pestis bv. Antiqua (strain Angola).